A 431-amino-acid chain; its full sequence is 5-methylthioadenosine/S-adenosylhomocysteine deaminase (431 aa).

Positions 66 and 68 each coordinate Zn(2+). Glutamate 95, arginine 147, and histidine 185 together coordinate substrate. Histidine 212 lines the Zn(2+) pocket. Substrate contacts are provided by glutamate 215 and aspartate 300. Position 300 (aspartate 300) interacts with Zn(2+).

This sequence belongs to the metallo-dependent hydrolases superfamily. MTA/SAH deaminase family. Requires Zn(2+) as cofactor.

The enzyme catalyses S-adenosyl-L-homocysteine + H2O + H(+) = S-inosyl-L-homocysteine + NH4(+). It carries out the reaction S-methyl-5'-thioadenosine + H2O + H(+) = S-methyl-5'-thioinosine + NH4(+). In terms of biological role, catalyzes the deamination of 5-methylthioadenosine and S-adenosyl-L-homocysteine into 5-methylthioinosine and S-inosyl-L-homocysteine, respectively. Is also able to deaminate adenosine. This Acetivibrio thermocellus (strain ATCC 27405 / DSM 1237 / JCM 9322 / NBRC 103400 / NCIMB 10682 / NRRL B-4536 / VPI 7372) (Clostridium thermocellum) protein is 5-methylthioadenosine/S-adenosylhomocysteine deaminase.